The following is a 199-amino-acid chain: Imidazoleglycerol-phosphate dehydratase (199 aa).

It belongs to the imidazoleglycerol-phosphate dehydratase family.

It localises to the cytoplasm. It carries out the reaction D-erythro-1-(imidazol-4-yl)glycerol 3-phosphate = 3-(imidazol-4-yl)-2-oxopropyl phosphate + H2O. The protein operates within amino-acid biosynthesis; L-histidine biosynthesis; L-histidine from 5-phospho-alpha-D-ribose 1-diphosphate: step 6/9. The polypeptide is Imidazoleglycerol-phosphate dehydratase (Mesorhizobium japonicum (strain LMG 29417 / CECT 9101 / MAFF 303099) (Mesorhizobium loti (strain MAFF 303099))).